The primary structure comprises 331 residues: Nucleotide sugar transporter SLC35B4 (331 aa).

The next 11 helical transmembrane spans lie at 4-24 (AFAV…LELL), 30-50 (GCGN…GFLF), 59-79 (PAIP…VSVV), 92-112 (LHMI…IIIL), 124-144 (IALV…QVTV), 153-173 (GFQA…ALLM), 201-221 (ALPL…VVLF), 229-249 (VPVI…NVVT), 251-267 (YVCI…CTSL), 268-288 (TVTL…ILYF), and 294-314 (MWHW…TEVW). The Mediates endoplasmic reticulum retention signature appears at 326–331 (KDDKKD).

This sequence belongs to the nucleotide-sugar transporter family. SLC35B subfamily.

It localises to the endoplasmic reticulum membrane. The enzyme catalyses UDP-N-acetyl-alpha-D-glucosamine(in) + UDP-alpha-D-glucuronate(out) = UDP-N-acetyl-alpha-D-glucosamine(out) + UDP-alpha-D-glucuronate(in). It carries out the reaction UDP-alpha-D-xylose(in) + UDP-alpha-D-glucuronate(out) = UDP-alpha-D-xylose(out) + UDP-alpha-D-glucuronate(in). Its function is as follows. Antiporter that transports nucleotide sugars across the endoplasmic reticulum (ER) membrane in exchange for another nucleotide sugar. May couple UDP-alpha-D-glucuronate (UDP-GlcA) or UDP-alpha-D-xylose (UDP-Xyl) efflux to UDP-alpha-D-glucuronate (UDP-GlcA) influx into the ER lumen, which in turn stimulates glucuronidation and excretion of endobiotics and xenobiotics. The chain is Nucleotide sugar transporter SLC35B4 (Slc35b4) from Mus musculus (Mouse).